The following is a 364-amino-acid chain: Probable 7-methylxanthine methyltransferase 5 (364 aa).

Y19 is a binding site for S-adenosyl-L-homocysteine. Position 26 (T26) interacts with theobromine. Residues C64, Q69, D101, L102, S134, and F135 each coordinate S-adenosyl-L-homocysteine. 3 residues coordinate theobromine: Y152, H155, and W156. Mg(2+)-binding residues include N172, D258, F260, and N261. Theobromine is bound at residue F314.

This sequence belongs to the methyltransferase superfamily. Type-7 methyltransferase family. Mg(2+) serves as cofactor.

It catalyses the reaction 7-methylxanthine + S-adenosyl-L-methionine = theobromine + S-adenosyl-L-homocysteine + H(+). Its pathway is alkaloid biosynthesis. In terms of biological role, involved in the biosynthesis of theobromine. The sequence is that of Probable 7-methylxanthine methyltransferase 5 from Theobroma cacao (Cacao).